A 215-amino-acid chain; its full sequence is MPGEATETVPVTEQEMQQPQAETGSGTESDSDESVPDLEEGDSAQTQTQQAQLAAAAEIDEEPVSKAKQSRSEKKARKAMSKLGLRQVAGVTRVTIRKSKNILFVITKPDVYKSPASDTYIVFGEAKIEDLSQQAQLAAAEKFKVQGEAVSNIQENTQTPTVQEESEEEEVDETGVEVKDIELVMSQANVSRAKAVRALKNNNNDIVNAIMELTM.

The tract at residues 1–82 (MPGEATETVP…EKKARKAMSK (82 aa)) is disordered. Polar residues predominate over residues 9–28 (VPVTEQEMQQPQAETGSGTE). A compositionally biased stretch (acidic residues) spans 29–42 (SDSDESVPDLEEGD). A compositionally biased stretch (low complexity) spans 44–57 (AQTQTQQAQLAAAA). The NAC-A/B domain occupies 70-135 (SRSEKKARKA…AKIEDLSQQA (66 aa)). Ser-166 is subject to Phosphoserine. The 38-residue stretch at 176 to 213 (VEVKDIELVMSQANVSRAKAVRALKNNNNDIVNAIMEL) folds into the UBA domain.

It belongs to the NAC-alpha family.

Functionally, may promote appropriate targeting of ribosome-nascent polypeptide complexes. The chain is Nascent polypeptide-associated complex subunit alpha (naca) from Danio rerio (Zebrafish).